The chain runs to 420 residues: UDP-N-acetylglucosamine 1-carboxyvinyltransferase (420 aa).

22–23 (KN) contacts phosphoenolpyruvate. Arg93 is a UDP-N-acetyl-alpha-D-glucosamine binding site. The active-site Proton donor is the Cys117. Residue Cys117 is modified to 2-(S-cysteinyl)pyruvic acid O-phosphothioketal. UDP-N-acetyl-alpha-D-glucosamine is bound by residues Asp307 and Ile329.

Belongs to the EPSP synthase family. MurA subfamily.

The protein localises to the cytoplasm. It catalyses the reaction phosphoenolpyruvate + UDP-N-acetyl-alpha-D-glucosamine = UDP-N-acetyl-3-O-(1-carboxyvinyl)-alpha-D-glucosamine + phosphate. Its pathway is cell wall biogenesis; peptidoglycan biosynthesis. In terms of biological role, cell wall formation. Adds enolpyruvyl to UDP-N-acetylglucosamine. The protein is UDP-N-acetylglucosamine 1-carboxyvinyltransferase of Saccharophagus degradans (strain 2-40 / ATCC 43961 / DSM 17024).